We begin with the raw amino-acid sequence, 1946 residues long: Integrin beta-like protein E (1946 aa).

Positions M1–L22 are cleaved as a signal peptide. Residues V23–T1875 are Extracellular-facing. Residues N107, N134, and N203 are each glycosylated (N-linked (GlcNAc...) asparagine). The 38-residue stretch at Y423–D460 folds into the EGF-like domain. Intrachain disulfides connect C433–C448 and C450–C459. In terms of domain architecture, VWFA spans D514–V699. 18 N-linked (GlcNAc...) asparagine glycosylation sites follow: N705, N860, N1043, N1113, N1177, N1374, N1401, N1513, N1611, N1620, N1662, N1671, N1737, N1743, N1762, N1812, N1852, and N1873. A helical transmembrane segment spans residues V1876 to W1896. At K1897–D1946 the chain is on the cytoplasmic side.

It belongs to the SIB family. In terms of assembly, interacts with talA/talin.

It is found in the membrane. Functionally, implicated in cellular adhesion. This chain is Integrin beta-like protein E (sibE), found in Dictyostelium discoideum (Social amoeba).